Here is a 286-residue protein sequence, read N- to C-terminus: 4-hydroxybenzoate octaprenyltransferase (286 aa).

8 helical membrane passes run 20–40, 43–63, 96–116, 142–162, 167–187, 210–230, 235–255, and 266–286; these read IGTLLLLWPCLMALVLAAGGM, LKVLIIFIIGVVIMRACGCII, LFVILGLAAFGLVLLLNGLVV, FLGVVWSWSIPMAYAAQTGEV, WWLFAANWFWTVAYDTMYAMV, QIIGLFQIAALFCFVAAGWSA, VYGLGLLTFVGFSTYQQMLIF, and FLNNNWAGLVLFVSLGADYLF.

Belongs to the UbiA prenyltransferase family. Mg(2+) serves as cofactor.

It localises to the cell inner membrane. The catalysed reaction is all-trans-octaprenyl diphosphate + 4-hydroxybenzoate = 4-hydroxy-3-(all-trans-octaprenyl)benzoate + diphosphate. It functions in the pathway cofactor biosynthesis; ubiquinone biosynthesis. In terms of biological role, catalyzes the prenylation of para-hydroxybenzoate (PHB) with an all-trans polyprenyl group. Mediates the second step in the final reaction sequence of ubiquinone-8 (UQ-8) biosynthesis, which is the condensation of the polyisoprenoid side chain with PHB, generating the first membrane-bound Q intermediate 3-octaprenyl-4-hydroxybenzoate. This chain is 4-hydroxybenzoate octaprenyltransferase, found in Shewanella oneidensis (strain ATCC 700550 / JCM 31522 / CIP 106686 / LMG 19005 / NCIMB 14063 / MR-1).